A 469-amino-acid chain; its full sequence is Neuraminidase (469 aa).

The Intravirion segment spans residues 1-6 (MNPNQK). The chain crosses the membrane as a helical span at residues 7–29 (TITIGSVSLTIATVCFLMQIAIL). Positions 11 to 33 (GSVSLTIATVCFLMQIAILATTV) are involved in apical transport and lipid raft association. Residues 30 to 469 (ATTVTLHFKQ…DGANINFMPI (440 aa)) lie on the Virion surface side of the membrane. The interval 36–88 (HFKQHECDSPASNQVMPCEPIIIERNITEIVYLNNTTIEKEICPEVVEYRNWS) is hypervariable stalk region. 4 N-linked (GlcNAc...) asparagine; by host glycosylation sites follow: Asn-61, Asn-69, Asn-70, and Asn-86. The segment at 91–469 (QCQITGFAPF…DGANINFMPI (379 aa)) is head of neuraminidase. Intrachain disulfides connect Cys-92–Cys-417, Cys-124–Cys-129, Cys-183–Cys-230, Cys-232–Cys-237, Cys-278–Cys-291, Cys-280–Cys-289, Cys-318–Cys-337, and Cys-421–Cys-447. Arg-118 lines the substrate pocket. Asn-146 is a glycosylation site (N-linked (GlcNAc...) asparagine; by host). The Proton donor/acceptor role is filled by Asp-151. Arg-152 serves as a coordination point for substrate. 2 N-linked (GlcNAc...) asparagine; by host glycosylation sites follow: Asn-200 and Asn-234. 276 to 277 (EE) is a substrate binding site. Arg-292 is a binding site for substrate. 3 residues coordinate Ca(2+): Asp-293, Gly-297, and Asp-324. Residues 325-349 (TPRNDDSSSNSNCRDPNNERGNPGV) are disordered. Residue Arg-371 coordinates substrate. N-linked (GlcNAc...) asparagine; by host glycosylation occurs at Asn-402. Tyr-406 functions as the Nucleophile in the catalytic mechanism.

Belongs to the glycosyl hydrolase 34 family. In terms of assembly, homotetramer. Requires Ca(2+) as cofactor. N-glycosylated.

The protein resides in the virion membrane. It is found in the host apical cell membrane. The enzyme catalyses Hydrolysis of alpha-(2-&gt;3)-, alpha-(2-&gt;6)-, alpha-(2-&gt;8)- glycosidic linkages of terminal sialic acid residues in oligosaccharides, glycoproteins, glycolipids, colominic acid and synthetic substrates.. Its activity is regulated as follows. Inhibited by the neuraminidase inhibitors zanamivir (Relenza) and oseltamivir (Tamiflu). These drugs interfere with the release of progeny virus from infected cells and are effective against all influenza strains. Resistance to neuraminidase inhibitors is quite rare. In terms of biological role, catalyzes the removal of terminal sialic acid residues from viral and cellular glycoconjugates. Cleaves off the terminal sialic acids on the glycosylated HA during virus budding to facilitate virus release. Additionally helps virus spread through the circulation by further removing sialic acids from the cell surface. These cleavages prevent self-aggregation and ensure the efficient spread of the progeny virus from cell to cell. Otherwise, infection would be limited to one round of replication. Described as a receptor-destroying enzyme because it cleaves a terminal sialic acid from the cellular receptors. May facilitate viral invasion of the upper airways by cleaving the sialic acid moieties on the mucin of the airway epithelial cells. Likely to plays a role in the budding process through its association with lipid rafts during intracellular transport. May additionally display a raft-association independent effect on budding. Plays a role in the determination of host range restriction on replication and virulence. Sialidase activity in late endosome/lysosome traffic seems to enhance virus replication. This Influenza A virus (strain A/RI/5-/1957 H2N2) protein is Neuraminidase.